Consider the following 396-residue polypeptide: Elongation factor Tu 2 (396 aa).

In terms of domain architecture, tr-type G spans 10 to 206 (KPHVNVGTIG…ALDTYIPTPE (197 aa)). The G1 stretch occupies residues 19–26 (GHVDHGKT). 19-26 (GHVDHGKT) lines the GTP pocket. Thr-26 serves as a coordination point for Mg(2+). The tract at residues 60–64 (GITIN) is G2. The interval 81–84 (DCPG) is G3. GTP-binding positions include 81-85 (DCPGH) and 136-139 (NKCD). The G4 stretch occupies residues 136–139 (NKCD). The segment at 174–176 (SAK) is G5.

The protein belongs to the TRAFAC class translation factor GTPase superfamily. Classic translation factor GTPase family. EF-Tu/EF-1A subfamily. As to quaternary structure, monomer.

It is found in the cytoplasm. It carries out the reaction GTP + H2O = GDP + phosphate + H(+). GTP hydrolase that promotes the GTP-dependent binding of aminoacyl-tRNA to the A-site of ribosomes during protein biosynthesis. The protein is Elongation factor Tu 2 of Acidovorax sp. (strain JS42).